The chain runs to 549 residues: Probable protein kinase UbiB (549 aa).

Residues 123-501 (DFNEIPLASA…QQQAHKSNYL (379 aa)) form the Protein kinase domain. ATP contacts are provided by residues 129–137 (LASASISQV) and K152. D287 serves as the catalytic Proton acceptor. Transmembrane regions (helical) follow at residues 496–516 (HKSN…TLLI) and 520–540 (ATLW…FVGW).

This sequence belongs to the ABC1 family. UbiB subfamily.

The protein resides in the cell inner membrane. It participates in cofactor biosynthesis; ubiquinone biosynthesis [regulation]. In terms of biological role, is probably a protein kinase regulator of UbiI activity which is involved in aerobic coenzyme Q (ubiquinone) biosynthesis. The polypeptide is Probable protein kinase UbiB (Shewanella baltica (strain OS223)).